The sequence spans 361 residues: G-protein coupled receptor 183 (361 aa).

Residues 1-31 (MDIQMANNFTPPSATPQGNDCDLYAHHSTAR) lie on the Extracellular side of the membrane. The helical transmembrane segment at 32–57 (IVMPLHYSLVFIIGLVGNLLALVVIV) threads the bilayer. The Cytoplasmic portion of the chain corresponds to 58 to 77 (QNRKKINSTTLYSTNLVISD). The helical transmembrane segment at 78 to 95 (ILFTTALPTRIAYYAMGF) threads the bilayer. R87 serves as a coordination point for 7alpha,25-dihydroxycholesterol. Topologically, residues 96–105 (DWRIGDALCR) are extracellular. A disulfide bridge links C104 with C181. Residues 106–127 (ITALVFYINTYAGVNFMTCLSI) traverse the membrane as a helical segment. Y112 and Y116 together coordinate 7alpha,25-dihydroxycholesterol. Positions 126–134 (SIDRFIAVV) are interaction with G proteins. Over 128 to 149 (DRFIAVVHPLRYNKIKRIEHAK) the chain is Cytoplasmic. The helical transmembrane segment at 150–168 (GVCIFVWILVFAQTLPLLI) threads the bilayer. Over 169–192 (NPMSKQEAERITCMEYPNFEETKS) the chain is Extracellular. A helical membrane pass occupies residues 193 to 215 (LPWILLGACFIGYVLPLIIILIC). Over 216-241 (YSQICCKLFRTAKQNPLTEKSGVNKK) the chain is Cytoplasmic. The chain crosses the membrane as a helical span at residues 242-265 (ALNTIILIIVVFVLCFTPYHVAII). Y260 serves as a coordination point for 7alpha,25-dihydroxycholesterol. At 266 to 287 (QHMIKKLRFSNFLECSQRHSFQ) the chain is on the extracellular side. A helical transmembrane segment spans residues 288 to 312 (ISLHFTVCLMNFNCCMDPFIYFFAC). Over 313-361 (KGYKRKVMRMLKRQVSVSISSAVKSAPEENSREMTETQMMIHSKSSNGK) the chain is Cytoplasmic. The residue at position 328 (S328) is a Phosphoserine. Residues 340-361 (EENSREMTETQMMIHSKSSNGK) are disordered. Polar residues predominate over residues 348–361 (ETQMMIHSKSSNGK).

Belongs to the G-protein coupled receptor 1 family. In terms of assembly, homodimer and heterodimer. Heterodimerizes with CXCR5; leading to modulate the interaction between of CXCL13 and CXCR5. Expressed abundantly in lymphoid tissues such as spleen and lymph node, and in B- and T-lymphocytes. Also highly expressed in lung, heart and gastrointestinal tract, and weakly expressed in the urogenital system and brain. Expressed in astrocytes.

It is found in the cell membrane. Functionally, G-protein coupled receptor expressed in lymphocytes that acts as a chemotactic receptor for B-cells, T-cells, splenic dendritic cells, monocytes/macrophages and astrocytes. Receptor for oxysterol 7-alpha,25-dihydroxycholesterol (7-alpha,25-OHC) and other related oxysterols. Mediates cell positioning and movement of a number of cells by binding the 7-alpha,25-OHC ligand that forms a chemotactic gradient. Binding of 7-alpha,25-OHC mediates the correct localization of B-cells during humoral immune responses. Guides B-cell movement along the B-cell zone-T-cell zone boundary and later to interfollicular and outer follicular regions. Its specific expression during B-cell maturation helps position B-cells appropriately for mounting T-dependent antibody responses. Collaborates with CXCR5 to mediate B-cell migration; probably by forming a heterodimer with CXCR5 that affects the interaction between of CXCL13 and CXCR5. Also acts as a chemotactic receptor for some T-cells upon binding to 7-alpha,25-OHC ligand. Promotes follicular helper T (Tfh) cells differentiation by positioning activated T-cells at the follicle-T-zone interface, promoting contact of newly activated CD4 T-cells with activated dendritic cells and exposing them to Tfh-cell-promoting inducible costimulator (ICOS) ligand. Expression in splenic dendritic cells is required for their homeostasis, localization and ability to induce B- and T-cell responses: GPR183 acts as a chemotactic receptor in dendritic cells that mediates the accumulation of CD4(+) dendritic cells in bridging channels. Regulates migration of astrocytes and is involved in communication between astrocytes and macrophages. Promotes osteoclast precursor migration to bone surfaces. Signals constitutively through G(i)-alpha, but not G(s)-alpha or G(q)-alpha. Signals constitutively also via MAPK1/3 (ERK1/2). The chain is G-protein coupled receptor 183 from Homo sapiens (Human).